We begin with the raw amino-acid sequence, 88 residues long: Small ribosomal subunit protein bS20 (88 aa).

It belongs to the bacterial ribosomal protein bS20 family.

Its function is as follows. Binds directly to 16S ribosomal RNA. This is Small ribosomal subunit protein bS20 from Blochmanniella floridana.